We begin with the raw amino-acid sequence, 158 residues long: ATP synthase subunit beta, mitochondrial (158 aa).

It belongs to the ATPase alpha/beta chains family. As to quaternary structure, F-type ATPases have 2 components, CF(1) - the catalytic core - and CF(0) - the membrane proton channel. CF(1) has five subunits: alpha(3), beta(3), gamma(1), delta(1), epsilon(1). CF(0) has three main subunits: a, b and c.

It is found in the mitochondrion. It localises to the mitochondrion inner membrane. The catalysed reaction is ATP + H2O + 4 H(+)(in) = ADP + phosphate + 5 H(+)(out). Its function is as follows. Mitochondrial membrane ATP synthase (F(1)F(0) ATP synthase or Complex V) produces ATP from ADP in the presence of a proton gradient across the membrane which is generated by electron transport complexes of the respiratory chain. F-type ATPases consist of two structural domains, F(1) - containing the extramembraneous catalytic core, and F(0) - containing the membrane proton channel, linked together by a central stalk and a peripheral stalk. During catalysis, ATP synthesis in the catalytic domain of F(1) is coupled via a rotary mechanism of the central stalk subunits to proton translocation. Subunits alpha and beta form the catalytic core in F(1). Rotation of the central stalk against the surrounding alpha(3)beta(3) subunits leads to hydrolysis of ATP in three separate catalytic sites on the beta subunits. In Schizaphis graminum (Green bug aphid), this protein is ATP synthase subunit beta, mitochondrial.